The primary structure comprises 91 residues: ATP-dependent Clp protease adapter protein ClpS (91 aa).

Belongs to the ClpS family. As to quaternary structure, binds to the N-terminal domain of the chaperone ClpA.

Involved in the modulation of the specificity of the ClpAP-mediated ATP-dependent protein degradation. The chain is ATP-dependent Clp protease adapter protein ClpS from Helicobacter pylori (strain ATCC 700392 / 26695) (Campylobacter pylori).